A 160-amino-acid chain; its full sequence is Deoxyuridine 5'-triphosphate nucleotidohydrolase (160 aa).

Residues 72-74 (RSG), Asn85, and 89-91 (TID) contribute to the substrate site.

It belongs to the dUTPase family. Mg(2+) is required as a cofactor.

The enzyme catalyses dUTP + H2O = dUMP + diphosphate + H(+). It participates in pyrimidine metabolism; dUMP biosynthesis; dUMP from dCTP (dUTP route): step 2/2. Its function is as follows. This enzyme is involved in nucleotide metabolism: it produces dUMP, the immediate precursor of thymidine nucleotides and it decreases the intracellular concentration of dUTP so that uracil cannot be incorporated into DNA. The sequence is that of Deoxyuridine 5'-triphosphate nucleotidohydrolase from Methylocella silvestris (strain DSM 15510 / CIP 108128 / LMG 27833 / NCIMB 13906 / BL2).